The primary structure comprises 66 residues: MPKMKTHRASAKRFKRTANGGLKRHHAFTGHRFHGKTKKQRRHLRKPAMVSRSDMKRIKQMVAQMH.

Residues 1 to 46 show a composition bias toward basic residues; it reads MPKMKTHRASAKRFKRTANGGLKRHHAFTGHRFHGKTKKQRRHLRK. The tract at residues 1-52 is disordered; sequence MPKMKTHRASAKRFKRTANGGLKRHHAFTGHRFHGKTKKQRRHLRKPAMVSR.

The protein belongs to the bacterial ribosomal protein bL35 family.

In Lactobacillus acidophilus (strain ATCC 700396 / NCK56 / N2 / NCFM), this protein is Large ribosomal subunit protein bL35.